The primary structure comprises 455 residues: Protein U54 (455 aa).

This sequence belongs to the herpesviridae UL82 family.

This is Protein U54 (U54) from Homo sapiens (Human).